A 111-amino-acid chain; its full sequence is Small ribosomal subunit protein bS16 (111 aa).

The interval 92–111 is disordered; the sequence is EKGVKESNEIVEPEGEEVKE. The segment covering 100 to 111 has biased composition (acidic residues); that stretch reads EIVEPEGEEVKE.

It belongs to the bacterial ribosomal protein bS16 family.

The sequence is that of Small ribosomal subunit protein bS16 from Petrotoga mobilis (strain DSM 10674 / SJ95).